Consider the following 227-residue polypeptide: MSRFIQGDCVRVMATFPGNAVDFILTDPPYLVGFRDRQGRTIAGDKTDEWLQPACNEMYRVLKKDALMVSFYGWNRVDRFMAAWKNAGFSVVGHLVFTKTYTSKAAYVGYRHECAYILAKGRPALPQKPLPDVLGWKYSGNRHHPTEKPVTSLQPLIESFTHPNAIVLDPFAGSGSTCVAALQSGRRYIGIELLEQYHRAGQQRLAAVQRAMQQGAANDDWFMPEAA.

This sequence belongs to the N(4)/N(6)-methyltransferase family.

Functionally, a putative beta subtype methylase whose recognition site is unknown. This is Putative methylase YubD (yubD) from Escherichia coli (strain K12).